The chain runs to 318 residues: Pantothenate kinase (318 aa).

Gly96 to Ser103 is a binding site for ATP.

This sequence belongs to the prokaryotic pantothenate kinase family.

It is found in the cytoplasm. It catalyses the reaction (R)-pantothenate + ATP = (R)-4'-phosphopantothenate + ADP + H(+). It participates in cofactor biosynthesis; coenzyme A biosynthesis; CoA from (R)-pantothenate: step 1/5. This chain is Pantothenate kinase, found in Rhodopseudomonas palustris (strain ATCC BAA-98 / CGA009).